The chain runs to 559 residues: Tissue-type plasminogen activator (559 aa).

The signal sequence occupies residues 1 to 17; it reads MKRELLCVLLLCGLAFP. A propeptide spanning residues 18 to 29 is cleaved from the precursor; it reads LPDQGIHGRFRR. The propeptide at 30 to 32 is removed by plasmin; sequence GAR. The Fibronectin type-I domain maps to 36 to 78; the sequence is ATCRDEPTQTTYQQHQSWLRPMLRSSRVEYCRCNSGLVQCHSV. 17 cysteine pairs are disulfide-bonded: C38–C68, C66–C75, C83–C94, C88–C105, C107–C116, C124–C205, C145–C187, C176–C200, C213–C294, C234–C276, C265–C289, C297–C428, C340–C356, C348–C417, C442–C516, C474–C490, and C506–C534. Positions 39 to 49 are important for binding to annexin A2; sequence RDEPTQTTYQQ. Residues 79-117 enclose the EGF-like domain; the sequence is PVRSCSEPRCFNGGTCQQALYFSDFVCQCPDGFVGKRCD. Kringle domains are found at residues 124-205 and 213-294; these read CFEE…TPAC and CYVG…MSPC. Residue N149 is glycosylated (N-linked (GlcNAc...) asparagine). Residues 309 to 558 enclose the Peptidase S1 domain; the sequence is IKGGLYTDIT…YLDWIHDNMK (250 aa). Residues H355 and D404 each act as charge relay system in the active site. N481 is a glycosylation site (N-linked (GlcNAc...) asparagine). The active-site Charge relay system is S510.

This sequence belongs to the peptidase S1 family. In terms of assembly, heterodimer of chain A and chain B held by a disulfide bond. Binds to fibrin with high affinity. This interaction leads to an increase in the catalytic efficiency of the enzyme due to an increase in affinity for plasminogen. Similarly, binding to heparin increases the activation of plasminogen. Binds to annexin A2, cytokeratin-8, fibronectin and laminin. Binds to mannose receptor and the low-density lipoprotein receptor-related protein (LRP1); these proteins are involved in TPA clearance. Binds LRP1B; binding is followed by internalization and degradation. Forms heterodimer with SERPINA5. Interacts with SERPINE1. In complex with SERPINE1, interacts with SORL1. Post-translationally, the single chain, almost fully active enzyme, can be further processed into a two-chain fully active form by a cleavage after Arg-308 catalyzed by plasmin, tissue kallikrein or factor Xa.

It is found in the secreted. Its subcellular location is the extracellular space. It carries out the reaction Specific cleavage of Arg-|-Val bond in plasminogen to form plasmin.. With respect to regulation, inhibited by SERPINA5. Inhibited by SERPINE1. Converts the abundant, but inactive, zymogen plasminogen to plasmin by hydrolyzing a single Arg-Val bond in plasminogen. By controlling plasmin-mediated proteolysis, it plays an important role in tissue remodeling and degradation, in cell migration and many other physiopathological events. During oocyte activation, plays a role in cortical granule reaction in the zona reaction, which contributes to the block to polyspermy. This Mus musculus (Mouse) protein is Tissue-type plasminogen activator (Plat).